Reading from the N-terminus, the 700-residue chain is Methionine synthase reductase (700 aa).

The 144-residue stretch at 4–147 (FLLLYATQRG…VVEPWIDGLW (144 aa)) folds into the Flavodoxin-like domain. FMN is bound by residues 10–14 (TQRGQ) and 93–124 (LLGLGDSEYTYFCNGGKVIDKRLQELGAQHFY). Residues 168–247 (TLAQASDAPL…SSLSIPAVSP (80 aa)) form a hinge region. Phosphoserine occurs at positions 173 and 190. The region spanning 272–534 (DPIFQVPISK…PRATNSFHLP (263 aa)) is the FAD-binding FR-type domain. Lys292 lines the NADP(+) pocket. Residues 452-455 (RPYS) and 488-491 (GVCT) contribute to the FAD site. NADP(+)-binding positions include 611 to 612 (SR), 626 to 628 (YVQ), and Asp661. Residue Trp699 participates in FAD binding.

In terms of assembly, forms a multiprotein complex with MMACHC, MMADHC and MTR. It depends on FAD as a cofactor. FMN serves as cofactor.

Its subcellular location is the cytoplasm. It carries out the reaction 2 methylcob(III)alamin-[methionine synthase] + 2 S-adenosyl-L-homocysteine + NADP(+) + H(+) = 2 cob(II)alamin-[methionine synthase] + 2 S-adenosyl-L-methionine + NADPH. The enzyme catalyses 2 cob(II)alamin + A + 2 H2O + 2 H(+) = 2 aquacob(III)alamin + AH2. Key enzyme in methionine and folate homeostasis responsible for the reactivation of methionine synthase (MTR/MS) activity by catalyzing the reductive methylation of MTR-bound cob(II)alamin. Cobalamin (vitamin B12) forms a complex with MTR to serve as an intermediary in methyl transfer reactions that cycles between MTR-bound methylcob(III)alamin and MTR bound-cob(I)alamin forms, and occasional oxidative escape of the cob(I)alamin intermediate during the catalytic cycle leads to the inactive cob(II)alamin species. The processing of cobalamin in the cytosol occurs in a multiprotein complex composed of at least MMACHC, MMADHC, MTRR and MTR which may contribute to shuttle safely and efficiently cobalamin towards MTR in order to produce methionine. Also necessary for the utilization of methyl groups from the folate cycle, thereby affecting transgenerational epigenetic inheritance. Also acts as a molecular chaperone for methionine synthase by stabilizing apoMTR and incorporating methylcob(III)alamin into apoMTR to form the holoenzyme. Also serves as an aquacob(III)alamin reductase by reducing aquacob(III)alamin to cob(II)alamin; this reduction leads to stimulation of the conversion of apoMTR and aquacob(III)alamin to MTR holoenzyme. This chain is Methionine synthase reductase (Mtrr), found in Rattus norvegicus (Rat).